We begin with the raw amino-acid sequence, 251 residues long: uncharacterized protein (251 aa).

An N-terminal signal peptide occupies residues 1-18 (MRILIILSIILCSFFARA).

Belongs to the MlaA family.

This is an uncharacterized protein from Rickettsia typhi (strain ATCC VR-144 / Wilmington).